The following is a 241-amino-acid chain: Orotidine 5'-phosphate decarboxylase (241 aa).

Substrate is bound by residues D19, K41, 69-78, T124, R185, Q194, G214, and R215; that span reads DLKFFDIPAT. K71 acts as the Proton donor in catalysis.

The protein belongs to the OMP decarboxylase family. Type 1 subfamily. Homodimer.

The catalysed reaction is orotidine 5'-phosphate + H(+) = UMP + CO2. It functions in the pathway pyrimidine metabolism; UMP biosynthesis via de novo pathway; UMP from orotate: step 2/2. Catalyzes the decarboxylation of orotidine 5'-monophosphate (OMP) to uridine 5'-monophosphate (UMP). In Stenotrophomonas maltophilia (strain K279a), this protein is Orotidine 5'-phosphate decarboxylase.